We begin with the raw amino-acid sequence, 153 residues long: SsrA-binding protein (153 aa).

The disordered stretch occupies residues 129 to 153 (KREDMKKKDQSREMAQALRERSKSH).

This sequence belongs to the SmpB family.

It localises to the cytoplasm. In terms of biological role, required for rescue of stalled ribosomes mediated by trans-translation. Binds to transfer-messenger RNA (tmRNA), required for stable association of tmRNA with ribosomes. tmRNA and SmpB together mimic tRNA shape, replacing the anticodon stem-loop with SmpB. tmRNA is encoded by the ssrA gene; the 2 termini fold to resemble tRNA(Ala) and it encodes a 'tag peptide', a short internal open reading frame. During trans-translation Ala-aminoacylated tmRNA acts like a tRNA, entering the A-site of stalled ribosomes, displacing the stalled mRNA. The ribosome then switches to translate the ORF on the tmRNA; the nascent peptide is terminated with the 'tag peptide' encoded by the tmRNA and targeted for degradation. The ribosome is freed to recommence translation, which seems to be the essential function of trans-translation. This Geobacter metallireducens (strain ATCC 53774 / DSM 7210 / GS-15) protein is SsrA-binding protein.